Reading from the N-terminus, the 663-residue chain is Protein LNK2 (663 aa).

Disordered stretches follow at residues 528 to 549 (HYTS…VIPR) and 590 to 663 (MEGP…KRKL). Basic and acidic residues predominate over residues 602–629 (GTEEKGNFPKCSIRETHLTKQKAQKEEG). The segment covering 639–648 (APNSGSSSTV) has biased composition (polar residues).

Interacts with CCA1, LHY, REV4 and REV8, but not with PRR7 or PRR9. Expressed in roots, stems, leaves, seedlings, cotyledons, inflorescences and siliques. Highest expression in root tips, young leaves and vasculatur tissues.

The protein resides in the nucleus. Transcriptional coactivator necessary for expression of the clock genes PRR5 and TOC1. Antagonizes REV8 function in the regulation of anthocyanin accumulation. Involved in red light input to the clock. Activates clock-controlled genes with afternoon peak. Mediates light inhibition of hypocotyl elongation. Unable to bind to DNA, but recruited to the evening element (EE)-containing region of the PRR5 and TOC1 promoters through its interaction with the DNA binding proteins REV8 and REV4. This is Protein LNK2 from Arabidopsis thaliana (Mouse-ear cress).